The sequence spans 386 residues: Coproporphyrinogen-III oxidase 1, chloroplastic (386 aa).

Residues Met1–Ser48 constitute a chloroplast transit peptide. The segment at Val125–Lys134 is important for dimerization. Ser174 is a substrate binding site. Catalysis depends on His188, which acts as the Proton donor. Substrate contacts are provided by residues Asn190–Arg192 and Gly344–Ser349. The segment at Tyr326 to Glu361 is important for dimerization.

Belongs to the aerobic coproporphyrinogen-III oxidase family. Homodimer. In terms of tissue distribution, expressed in cotyledons, leaves and roots.

Its subcellular location is the plastid. The protein resides in the chloroplast. It carries out the reaction coproporphyrinogen III + O2 + 2 H(+) = protoporphyrinogen IX + 2 CO2 + 2 H2O. The protein operates within porphyrin-containing compound metabolism; protoporphyrin-IX biosynthesis; protoporphyrinogen-IX from coproporphyrinogen-III (O2 route): step 1/1. It participates in porphyrin-containing compound metabolism; chlorophyll biosynthesis. Key enzyme in heme biosynthesis. Catalyzes the oxidative decarboxylation of propionic acid side chains of rings A and B of coproporphyrinogen III. In Arabidopsis thaliana (Mouse-ear cress), this protein is Coproporphyrinogen-III oxidase 1, chloroplastic (CPX1).